A 281-amino-acid chain; its full sequence is Splicing regulator RBM11 (281 aa).

An RRM domain is found at 10–87 (RTVFVGNLEA…RPINVQYRFG (78 aa)). Residues 184–281 (PSSYKWTHQQ…FRKSKKKKRY (98 aa)) form a disordered region. Composition is skewed to polar residues over residues 187 to 217 (YKWTHQQPSDSDLYQMTAPLPNSASVSSSLN) and 229 to 242 (YKWTHQQPSDSDLY). The Bipartite nuclear localization signal signature appears at 245–280 (NKRKRQKQTSDSDSSTDNNRGNECSQKFRKSKKKKR). Residues 271–281 (KFRKSKKKKRY) show a composition bias toward basic residues.

In terms of assembly, homodimer. In terms of tissue distribution, expressed in brain, hippocampus, prefrontal cortex, cerebellum, spinal cord, testis, mammary gland, spleen and kidney. Also expressed in fetal brain.

It is found in the nucleus. It localises to the nucleoplasm. The protein resides in the nucleus speckle. Functionally, tissue-specific splicing factor with potential implication in the regulation of alternative splicing during neuron and germ cell differentiation. Antagonizes SRSF1-mediated BCL-X splicing. May affect the choice of alternative 5' splice sites by binding to specific sequences in exons and antagonizing the SR protein SRSF1. The polypeptide is Splicing regulator RBM11 (Homo sapiens (Human)).